The chain runs to 121 residues: Large ribosomal subunit protein bL19 (121 aa).

The protein belongs to the bacterial ribosomal protein bL19 family.

This protein is located at the 30S-50S ribosomal subunit interface and may play a role in the structure and function of the aminoacyl-tRNA binding site. This Legionella pneumophila (strain Paris) protein is Large ribosomal subunit protein bL19.